The primary structure comprises 379 residues: Dual-specificity RNA methyltransferase RlmN (379 aa).

Catalysis depends on glutamate 97, which acts as the Proton acceptor. Residues 103 to 343 (QGGRGTLCVS…VRTTRGDDID (241 aa)) enclose the Radical SAM core domain. Cysteines 110 and 346 form a disulfide. The [4Fe-4S] cluster site is built by cysteine 117, cysteine 121, and cysteine 124. S-adenosyl-L-methionine contacts are provided by residues 171 to 172 (GE), serine 203, 225 to 227 (SLH), and asparagine 303. The S-methylcysteine intermediate role is filled by cysteine 346.

Belongs to the radical SAM superfamily. RlmN family. Requires [4Fe-4S] cluster as cofactor.

The protein resides in the cytoplasm. The enzyme catalyses adenosine(2503) in 23S rRNA + 2 reduced [2Fe-2S]-[ferredoxin] + 2 S-adenosyl-L-methionine = 2-methyladenosine(2503) in 23S rRNA + 5'-deoxyadenosine + L-methionine + 2 oxidized [2Fe-2S]-[ferredoxin] + S-adenosyl-L-homocysteine. The catalysed reaction is adenosine(37) in tRNA + 2 reduced [2Fe-2S]-[ferredoxin] + 2 S-adenosyl-L-methionine = 2-methyladenosine(37) in tRNA + 5'-deoxyadenosine + L-methionine + 2 oxidized [2Fe-2S]-[ferredoxin] + S-adenosyl-L-homocysteine. Functionally, specifically methylates position 2 of adenine 2503 in 23S rRNA and position 2 of adenine 37 in tRNAs. m2A2503 modification seems to play a crucial role in the proofreading step occurring at the peptidyl transferase center and thus would serve to optimize ribosomal fidelity. The chain is Dual-specificity RNA methyltransferase RlmN from Pseudomonas aeruginosa (strain ATCC 15692 / DSM 22644 / CIP 104116 / JCM 14847 / LMG 12228 / 1C / PRS 101 / PAO1).